We begin with the raw amino-acid sequence, 961 residues long: FYVE, RhoGEF and PH domain-containing protein 1 (961 aa).

Residues 1–11 show a composition bias toward gly residues; sequence MHGHRAPGGAG. The tract at residues 1-353 is disordered; it reads MHGHRAPGGA…DEEEEEEKDR (353 aa). The segment covering 27–38 has biased composition (low complexity); the sequence is PPACADSDPGAS. A Phosphoserine modification is found at Ser48. A compositionally biased stretch (basic and acidic residues) spans 125-135; sequence PHPEGPQRLRS. Pro residues-rich tracts occupy residues 156-165 and 172-190; these read GPKPQVPPKP and RMPP…PLPA. An SH3-binding motif is present at residues 171 to 187; it reads PRMPPPLEPIPPPPSRP. A compositionally biased stretch (low complexity) spans 199-213; it reads APRAEASPSSAAVSS. Ser205 carries the post-translational modification Phosphoserine. The span at 231–255 shows a compositional bias: pro residues; the sequence is VPGPSPGPPEPVMLPQPTSQPPVPQ. Residues 273 to 284 show a composition bias toward basic and acidic residues; that stretch reads RDGEKVPNRDSG. Composition is skewed to low complexity over residues 285–294 and 316–325; these read IDSISSPSNS and ALASVPVALA. Residues 335–351 show a composition bias toward acidic residues; that stretch reads VDSDLEEEDDEEEEEEK. Residues 373–561 enclose the DH domain; that stretch reads KVFHIANELL…ATAAEHSNAA (189 aa). The PH 1 domain maps to 590-689; it reads ELIKEGHILK…WVQAINSTLL (100 aa). Residues 702–726 form a disordered region; it reads NSTNREDEDTPPNSPNVDLGKRAPT. The residue at position 711 (Thr711) is a Phosphothreonine. Residue Ser715 is modified to Phosphoserine. The segment at 730 to 790 adopts an FYVE-type zinc-finger fold; it reads EKEVTMCMRC…VCTDCYVALH (61 aa). The Zn(2+) site is built by Cys736, Cys739, Cys753, Cys756, Cys761, Cys764, Cys782, and Cys785. Residues 821–921 form the PH 2 domain; sequence NSVICSFLHY…WMAVLGRAGR (101 aa). A disordered region spans residues 925-961; the sequence is FCPGPTLSEDREMEEAPVAALGATAEPPESPQTRDKT.

Interacts with DBNL/ABP1 and CTTN. May interact with CCPG1. Binds CDC42. Expressed in fetal heart, brain, lung, kidney and placenta. Less expressed in liver; adult heart, brain, lung, pancreas and skeletal muscle.

The protein localises to the cytoplasm. It is found in the cell projection. The protein resides in the lamellipodium. It localises to the ruffle. Its subcellular location is the cytoskeleton. Activates CDC42, a member of the Ras-like family of Rho- and Rac proteins, by exchanging bound GDP for free GTP. Plays a role in regulating the actin cytoskeleton and cell shape. The sequence is that of FYVE, RhoGEF and PH domain-containing protein 1 (FGD1) from Homo sapiens (Human).